Reading from the N-terminus, the 356-residue chain is Holliday junction branch migration complex subunit RuvB (356 aa).

The segment at 4–191 (TDKLATEQRI…FGIVARLEFY (188 aa)) is large ATPase domain (RuvB-L). Residues Leu-30, Arg-31, Gly-72, Lys-75, Thr-76, Thr-77, 138–140 (EDY), Arg-181, Tyr-191, and Arg-228 contribute to the ATP site. Mg(2+) is bound at residue Thr-76. Residues 192-262 (DAEQLSRIVR…VADAALAMLD (71 aa)) are small ATPAse domain (RuvB-S). The tract at residues 265–356 (PVGFDLMDRK…RDEWDTPDGK (92 aa)) is head domain (RuvB-H). Positions 301, 320, and 325 each coordinate DNA.

Belongs to the RuvB family. In terms of assembly, homohexamer. Forms an RuvA(8)-RuvB(12)-Holliday junction (HJ) complex. HJ DNA is sandwiched between 2 RuvA tetramers; dsDNA enters through RuvA and exits via RuvB. An RuvB hexamer assembles on each DNA strand where it exits the tetramer. Each RuvB hexamer is contacted by two RuvA subunits (via domain III) on 2 adjacent RuvB subunits; this complex drives branch migration. In the full resolvosome a probable DNA-RuvA(4)-RuvB(12)-RuvC(2) complex forms which resolves the HJ.

The protein resides in the cytoplasm. It catalyses the reaction ATP + H2O = ADP + phosphate + H(+). Functionally, the RuvA-RuvB-RuvC complex processes Holliday junction (HJ) DNA during genetic recombination and DNA repair, while the RuvA-RuvB complex plays an important role in the rescue of blocked DNA replication forks via replication fork reversal (RFR). RuvA specifically binds to HJ cruciform DNA, conferring on it an open structure. The RuvB hexamer acts as an ATP-dependent pump, pulling dsDNA into and through the RuvAB complex. RuvB forms 2 homohexamers on either side of HJ DNA bound by 1 or 2 RuvA tetramers; 4 subunits per hexamer contact DNA at a time. Coordinated motions by a converter formed by DNA-disengaged RuvB subunits stimulates ATP hydrolysis and nucleotide exchange. Immobilization of the converter enables RuvB to convert the ATP-contained energy into a lever motion, pulling 2 nucleotides of DNA out of the RuvA tetramer per ATP hydrolyzed, thus driving DNA branch migration. The RuvB motors rotate together with the DNA substrate, which together with the progressing nucleotide cycle form the mechanistic basis for DNA recombination by continuous HJ branch migration. Branch migration allows RuvC to scan DNA until it finds its consensus sequence, where it cleaves and resolves cruciform DNA. This Burkholderia cenocepacia (strain HI2424) protein is Holliday junction branch migration complex subunit RuvB.